The following is a 283-amino-acid chain: Putative casein kinase II subunit beta-4 (283 aa).

2 disordered regions span residues 1-23 (MYKD…EILG) and 35-92 (LDKH…SEGD). Residues 7–16 (GGGIMGGGGS) are compositionally biased toward gly residues. Polar residues predominate over residues 58–70 (VPSTSTAKSQLHS).

The protein belongs to the casein kinase 2 subunit beta family. As to quaternary structure, heterotetramer of two catalytic alpha subunits and two regulatory beta subunits. Post-translationally, phosphorylated by alpha subunit.

The protein localises to the cytoplasm. It is found in the cytosol. Plays a complex role in regulating the basal catalytic activity of the alpha subunit. The tetrameric holoenzyme CK2, composed of two alpha and two beta subunits, phosphorylates the transcription factor PIF1 after an exposure to light, resulting in a proteasome-dependent degradation of PIF1 and promotion of photomorphogenesis. CK2 phosphorylates translation initiation factors. May participate in the regulation of the initiation of translation. The sequence is that of Putative casein kinase II subunit beta-4 from Arabidopsis thaliana (Mouse-ear cress).